The following is a 404-amino-acid chain: Epoxide hydrolase 1 (404 aa).

The chain crosses the membrane as a helical span at residues 74-96 (ILVRLLQFYYFVKFSAILFLGFA). The 250-residue stretch at 140–389 (PLMLFIHGYP…ASHWVQQDEP (250 aa)) folds into the AB hydrolase-1 domain. The active-site Nucleophile is the Asp-215. Tyr-327 functions as the Proton donor in the catalytic mechanism. His-382 (proton acceptor) is an active-site residue.

It belongs to the AB hydrolase superfamily. Epoxide hydrolase family.

Its subcellular location is the membrane. The enzyme catalyses an epoxide + H2O = an ethanediol. The catalysed reaction is 8,9-epoxy-(5Z,11Z,14Z)-eicosatrienoate + H2O = 8,9-dihydroxy-(5Z,11Z,14Z)-eicosatrienoate. It carries out the reaction 11,12-epoxy-(5Z,8Z,14Z)-eicosatrienoate + H2O = 11,12-dihydroxy-(5Z,8Z,14Z)-eicosatrienoate. It catalyses the reaction 14,15-epoxy-(5Z,8Z,11Z)-eicosatrienoate + H2O = 14,15-dihydroxy-(5Z,8Z,11Z)-eicosatrienoate. The enzyme catalyses 12,13-epoxy-(9Z)-octadecenoate + H2O = 12,13-dihydroxy-(9Z)-octadecenoate. The catalysed reaction is 9,10-epoxy-(12Z)-octadecenoate + H2O = 9,10-dihydroxy-(12Z)-octadecenoate. Its pathway is lipid metabolism. Its function is as follows. Catalyzes the hydrolysis of epoxide-containing fatty acids. Active against epoxyeicosatrienoic acids (EETs) including 8,9-epoxy-(5Z,11Z,14Z)-eicosatrienoate (8,9-EET), 11,12-epoxy-(5Z,8Z,14Z)-eicosatrienoate (11,12-EET) and 14,15-epoxy-(5Z,8Z,11Z)-eicosatrienoate (14,15-EET) and the linoleic acid metabolites 12,13-epoxy-(9Z)-octadecenoate (12,13-EpOME) and 9,10-epoxy-(12Z)-octadecenoate (9,10-EpOME). These epoxides function as lipid signaling molecules, the enzyme can deplete the supply of the epoxide signal by transforming them into diol species that are more readily eliminated through excretion. This is Epoxide hydrolase 1 from Caenorhabditis elegans.